Reading from the N-terminus, the 828-residue chain is Putative dual specificity tyrosine-phosphorylation-regulated kinase 3 homolog (828 aa).

Positions 1 to 14 (MVGSQEKKNNHIEL) are enriched in basic and acidic residues. The tract at residues 1-26 (MVGSQEKKNNHIELSETPATDKNNLN) is disordered. Positions 17–26 (TPATDKNNLN) are enriched in polar residues. One can recognise a Protein kinase domain in the interval 276–589 (YEMLKIIGKG…PSEALKHPWL (314 aa)). ATP-binding positions include 282-290 (IGKGSFGQV) and Lys305. Residue Asp402 is the Proton acceptor of the active site. At Ser616 the chain carries Phosphoserine.

Belongs to the protein kinase superfamily. CMGC Ser/Thr protein kinase family. MNB/DYRK subfamily. Autophosphorylated on tyrosine residues.

The catalysed reaction is L-seryl-[protein] + ATP = O-phospho-L-seryl-[protein] + ADP + H(+). The enzyme catalyses L-threonyl-[protein] + ATP = O-phospho-L-threonyl-[protein] + ADP + H(+). It carries out the reaction L-tyrosyl-[protein] + ATP = O-phospho-L-tyrosyl-[protein] + ADP + H(+). The polypeptide is Putative dual specificity tyrosine-phosphorylation-regulated kinase 3 homolog (Dyrk3) (Drosophila melanogaster (Fruit fly)).